A 306-amino-acid chain; its full sequence is CRISPR-associated endonuclease Cas1 (306 aa).

3 residues coordinate Mn(2+): E143, H210, and D223.

Belongs to the CRISPR-associated endonuclease Cas1 family. Homodimer, forms a heterotetramer with a Cas2 homodimer. Requires Mg(2+) as cofactor. Mn(2+) serves as cofactor.

In terms of biological role, CRISPR (clustered regularly interspaced short palindromic repeat), is an adaptive immune system that provides protection against mobile genetic elements (viruses, transposable elements and conjugative plasmids). CRISPR clusters contain spacers, sequences complementary to antecedent mobile elements, and target invading nucleic acids. CRISPR clusters are transcribed and processed into CRISPR RNA (crRNA). Acts as a dsDNA endonuclease. Involved in the integration of spacer DNA into the CRISPR cassette. The protein is CRISPR-associated endonuclease Cas1 of Geobacter sulfurreducens (strain ATCC 51573 / DSM 12127 / PCA).